The primary structure comprises 296 residues: Maltose/maltodextrin transport system permease protein MalG (296 aa).

The Cytoplasmic portion of the chain corresponds to 1–12 (MAMVQPKSQKAR). A helical membrane pass occupies residues 13-35 (LFITHLLLLLFIAAIMFPLLMVV). Topologically, residues 36–88 (AISLRQGNFATGSLIPEQISWDHWKLALGFSVEQADGRITPPPFPVLLWLWNS) are periplasmic. An ABC transmembrane type-1 domain is found at 85 to 281 (LWNSVKVAGI…LPITIVFLLA (197 aa)). Residues 89 to 111 (VKVAGISAIGIVALSTTCAYAFA) form a helical membrane-spanning segment. Residues 112 to 123 (RMRFPGKATLLK) lie on the Cytoplasmic side of the membrane. Residues 124-143 (GMLIFQMFPAVLSLVALYAL) form a helical membrane-spanning segment. Residues 144–152 (FDRLGEYIP) lie on the Periplasmic side of the membrane. The helical transmembrane segment at 153-175 (FIGLNTHGGVIFAYLGGIALHVW) threads the bilayer. Topologically, residues 176–204 (TIKGYFETIDSSLEEAAALDGATPWQAFR) are cytoplasmic. Residues 205 to 227 (LVLLPLSVPILAVVFILSFIAAI) traverse the membrane as a helical segment. The Periplasmic portion of the chain corresponds to 228 to 257 (TEVPVASLLLRDVNSYTLAVGMQQYLNPQN). The chain crosses the membrane as a helical span at residues 258–280 (YLWGDFAAAAVMSALPITIVFLL). Residues 281–296 (AQRWLVNGLTAGGVKG) lie on the Cytoplasmic side of the membrane.

This sequence belongs to the binding-protein-dependent transport system permease family. MalFG subfamily. In terms of assembly, the complex is composed of two ATP-binding proteins (MalK), two transmembrane proteins (MalG and MalF) and a solute-binding protein (MalE).

It is found in the cell inner membrane. Part of the ABC transporter complex MalEFGK involved in maltose/maltodextrin import. Probably responsible for the translocation of the substrate across the membrane. The polypeptide is Maltose/maltodextrin transport system permease protein MalG (malG) (Escherichia coli O157:H7).